Here is a 95-residue protein sequence, read N- to C-terminus: Large ribosomal subunit protein uL23 (95 aa).

Belongs to the universal ribosomal protein uL23 family. Part of the 50S ribosomal subunit. Contacts protein L29.

Functionally, binds to 23S rRNA. One of the proteins that surrounds the polypeptide exit tunnel on the outside of the ribosome. The protein is Large ribosomal subunit protein uL23 of Methanopyrus kandleri (strain AV19 / DSM 6324 / JCM 9639 / NBRC 100938).